A 334-amino-acid polypeptide reads, in one-letter code: DGAT1/2-independent enzyme synthesizing storage lipids (334 aa).

Residues 1–50 (MTNKNQSFGVGQDSMSSMTCLIHVLEAWFGVEHLEDYWNFANYLLWVFTP) are Lumenal-facing. N-linked (GlcNAc...) asparagine glycosylation is present at N5. Residues 51 to 71 (LLLLILPYFTIFLLYLTIIFL) traverse the membrane as a helical segment. Residues 72–125 (HIYKRKNVLKEAYSHNLWDGARKTVATLWDGHAAVWHGYEVHGMEKIPEEGPAL) lie on the Cytoplasmic side of the membrane. A helical transmembrane segment spans residues 126–146 (IIFYHGAIPIDFYYFMAKIFI). The active site involves H130. At 147–334 (HKGRTCRVVA…NKQKINQKTL (188 aa)) the chain is on the lumenal side.

This sequence belongs to the diacylglycerol acyltransferase family. Highly divergent.

It localises to the endoplasmic reticulum membrane. It carries out the reaction a 1,2-diacylglycerol + a 1,2-diacyl-sn-glycero-3-phosphocholine = a triacylglycerol + a 1-acyl-sn-glycero-3-phosphocholine. It catalyses the reaction a 1-O-alkyl-2-acyl-sn-glycero-3-phosphocholine + a 1,2-diacylglycerol = a 1-O-alkyl-sn-glycero-3-phosphocholine + a triacylglycerol. The catalysed reaction is a 2-acylglycerol + an acyl-CoA = a 1,2-diacylglycerol + CoA. The enzyme catalyses an acyl-CoA + a 1,2-diacyl-sn-glycerol = a triacyl-sn-glycerol + CoA. It carries out the reaction 2-(9Z-octadecenoyl)-glycerol + (9Z)-octadecenoyl-CoA = 1,2-di-(9Z-octadecenoyl)-glycerol + CoA. It catalyses the reaction 1,2-di-(9Z-octadecenoyl)-sn-glycerol + (9Z)-octadecenoyl-CoA = 1,2,3-tri-(9Z-octadecenoyl)-glycerol + CoA. Acyltransferase activity is specifically inhibited by TMX1 at the endoplasmic reticulum, restricting accumulation of triacylglycerol. Catalytic subunit of the alternative triglyceride biosynthesis pathway, which mediates formation of triacylglycerol from diacylglycerol and membrane phospholipids. Synthesizes triacylglycerol at the expense of membrane phospholipids, such as phosphatidylcholine (PC) and its ether-linked form (ePC), thereby altering the composition of membranes. The alternative triglyceride biosynthesis pathway is probably required to provide the energy required for rapid growth when fuel sources are limiting. It maintains mitochondrial function during periods of extracellular lipid starvation. Can also use acyl-CoA as donor: acts as a acyl-CoA:monoacylglycerol acyltransferase (MGAT), but also shows acyl-CoA:diacylglycerol acyltransferase (DGAT) activity. The sequence is that of DGAT1/2-independent enzyme synthesizing storage lipids (TMEM68) from Bos taurus (Bovine).